We begin with the raw amino-acid sequence, 25 residues long: Caerin-2.4 (25 aa).

Expressed by the skin parotoid and/or rostral glands.

Its subcellular location is the secreted. In terms of biological role, antibacterial peptide, that adopts an alpha helical conformation which can disrupt bacterial membranes. Each caerin displays a different antimicrobial specificity. This chain is Caerin-2.4, found in Ranoidea caerulea (Green tree frog).